A 403-amino-acid chain; its full sequence is S-adenosylmethionine synthase (403 aa).

G141–D146 provides a ligand contact to ATP.

The protein belongs to the AdoMet synthase 2 family. Mg(2+) serves as cofactor.

It catalyses the reaction L-methionine + ATP + H2O = S-adenosyl-L-methionine + phosphate + diphosphate. It participates in amino-acid biosynthesis; S-adenosyl-L-methionine biosynthesis; S-adenosyl-L-methionine from L-methionine: step 1/1. Its function is as follows. Catalyzes the formation of S-adenosylmethionine from methionine and ATP. The polypeptide is S-adenosylmethionine synthase (Methanococcus aeolicus (strain ATCC BAA-1280 / DSM 17508 / OCM 812 / Nankai-3)).